A 287-amino-acid polypeptide reads, in one-letter code: ATP synthase gamma chain (287 aa).

Belongs to the ATPase gamma chain family. In terms of assembly, F-type ATPases have 2 components, CF(1) - the catalytic core - and CF(0) - the membrane proton channel. CF(1) has five subunits: alpha(3), beta(3), gamma(1), delta(1), epsilon(1). CF(0) has three main subunits: a, b and c.

It localises to the cell inner membrane. Produces ATP from ADP in the presence of a proton gradient across the membrane. The gamma chain is believed to be important in regulating ATPase activity and the flow of protons through the CF(0) complex. The polypeptide is ATP synthase gamma chain (Stenotrophomonas maltophilia (strain K279a)).